A 189-amino-acid polypeptide reads, in one-letter code: UPF0301 protein CTA_0231 (189 aa).

This sequence belongs to the UPF0301 (AlgH) family.

In Chlamydia trachomatis serovar A (strain ATCC VR-571B / DSM 19440 / HAR-13), this protein is UPF0301 protein CTA_0231.